The following is a 344-amino-acid chain: HTH-type transcriptional regulator MalR (344 aa).

The 54-residue stretch at 1 to 54 (MTTRLADIAAQAGVSEATVSRVLNGKPGVAATTRQSVLAALDVLGYERPVRLRQ) folds into the HTH lacI-type domain. The segment at residues 5–24 (LADIAAQAGVSEATVSRVLN) is a DNA-binding region (H-T-H motif).

Its function is as follows. Transcriptional repressor of the maltosaccharide utilization operon malEFG. This is HTH-type transcriptional regulator MalR (malR) from Streptomyces coelicolor (strain ATCC BAA-471 / A3(2) / M145).